The sequence spans 968 residues: Isoleucine--tRNA ligase (968 aa).

Positions 68 to 78 (PYANGALHMGH) match the 'HIGH' region motif. An L-isoleucyl-5'-AMP-binding site is contributed by Glu-584. The 'KMSKS' region signature appears at 625–629 (KMSKS). Position 628 (Lys-628) interacts with ATP. Residues Cys-938, Cys-941, Cys-958, and Cys-961 each contribute to the Zn(2+) site.

It belongs to the class-I aminoacyl-tRNA synthetase family. IleS type 1 subfamily. As to quaternary structure, monomer. The cofactor is Zn(2+).

It localises to the cytoplasm. The catalysed reaction is tRNA(Ile) + L-isoleucine + ATP = L-isoleucyl-tRNA(Ile) + AMP + diphosphate. Its function is as follows. Catalyzes the attachment of isoleucine to tRNA(Ile). As IleRS can inadvertently accommodate and process structurally similar amino acids such as valine, to avoid such errors it has two additional distinct tRNA(Ile)-dependent editing activities. One activity is designated as 'pretransfer' editing and involves the hydrolysis of activated Val-AMP. The other activity is designated 'posttransfer' editing and involves deacylation of mischarged Val-tRNA(Ile). This Prochlorococcus marinus (strain MIT 9313) protein is Isoleucine--tRNA ligase.